A 331-amino-acid polypeptide reads, in one-letter code: Thioredoxin-like fold domain-containing protein MRL7, chloroplastic (331 aa).

The N-terminal 59 residues, 1–59 (MSFFAVACSAPRSSMLLTGLNSSFSDMHRSPLFVFPVTISSRSVKRFAAVSSDSVLDPE), are a transit peptide targeting the chloroplast. 2 disordered regions span residues 52–105 (SDSV…ADAV) and 141–160 (GVDE…EDPD). Acidic residues predominate over residues 142 to 160 (VDEEEEEEEEMVVEEEDPD).

Component of the transcriptionally active chromosome (TAC) complexes. Interacts with FSD2 and PRDA1. Interacts with FSD3 and CITRX/TRXZ. Binds to PTAC12/HMR/PAP5. In terms of tissue distribution, expressed in leaves, shoots, stems, cauline leaves, flower buds, flowers and siliques.

Its subcellular location is the plastid. The protein resides in the chloroplast. The protein localises to the chloroplast stroma. It is found in the chloroplast nucleoid. It localises to the nucleus. Its function is as follows. Plays an essential role in early steps of chloroplast development. Involved in the regulation of plastid gene expression. May positively regulate plastid-encoded RNA polymerase (PEP) activity through binding to FSD3 and CITRX/TRXZ. Involved in redox-mediated regulation of chloroplast development. Possesses disulfide reductase activity in vitro. Required for the proper function of the plastid transcriptional machinery and protein accumulation in thylakoid membranes. May function as molecular chaperone to ensure proper organization of the nucleoids in chloroplasts. May mediate some aspect of thylakoid structure or function that controls non-photochemical quenching (NPQ). Participates in the early light signaling events of photobody biogenesis in chloroplasts. May mediate the degradation of two repressors of chloroplast biogenesis, PIF1 and PIF3 in nucleus. Collaboratively with PTAC12/HMR/PAP5, involved in the regulation of thermoresponsive responses via the stabilization of PIF4 in the daytime to initiate thermomorphogenesis. The polypeptide is Thioredoxin-like fold domain-containing protein MRL7, chloroplastic (Arabidopsis thaliana (Mouse-ear cress)).